A 218-amino-acid polypeptide reads, in one-letter code: Mitochondrial fission factor (218 aa).

Residues 1–198 are Cytoplasmic-facing; sequence MAEISRIQYE…ENKERAKREM (198 aa). Thr89 carries the phosphothreonine modification. 4 positions are modified to phosphoserine: Ser129, Ser131, Ser146, and Ser171. Positions 167–198 form a coiled coil; the sequence is VDAASLRRQIIKLNRRLQLLEEENKERAKREM. The chain crosses the membrane as a helical; Anchor for type IV membrane protein span at residues 199–216; the sequence is VMYSITVAFWLLNSWLWF. Residues 217-218 lie on the Mitochondrial intermembrane side of the membrane; that stretch reads RR.

Belongs to the Tango11 family. As to quaternary structure, homodimer. Interacts with DNM1L. Interacts with C11orf65/MFI; the interaction inhibits MFF interaction with DNM1L.

It localises to the mitochondrion outer membrane. The protein localises to the peroxisome. The protein resides in the cytoplasmic vesicle. It is found in the secretory vesicle. Its subcellular location is the synaptic vesicle. In terms of biological role, plays a role in mitochondrial and peroxisomal fission. Promotes the recruitment and association of the fission mediator dynamin-related protein 1 (DNM1L) to the mitochondrial surface. May be involved in regulation of synaptic vesicle membrane dynamics by recruitment of DNM1L to clathrin-containing vesicles. This is Mitochondrial fission factor (MFF) from Pongo abelii (Sumatran orangutan).